The sequence spans 776 residues: Glucocorticoid receptor (776 aa).

3 disordered regions span residues 1–25 (MDPK…YNDK), 47–86 (SCPT…PQPD), and 394–415 (SSPG…STGP). The modulating stretch occupies residues 1–419 (MDPKDLLKPS…STSTGPPPKL (419 aa)). Polar residues predominate over residues 47–83 (SCPTSTASQSNTRQQQHFQKQLTATGDSTNGLNNNVP). Residues 403–413 (SPSPSTSSTST) are compositionally biased toward low complexity. NR C4-type zinc fingers lie at residues 420 to 440 (CLVC…CGSC) and 456 to 480 (CAGR…YRKC). The nuclear receptor DNA-binding region spans 420–485 (CLVCSDEASG…RYRKCLQAGM (66 aa)). The tract at residues 486–522 (NLEARKTKKKIKGIQQSTTATARESPETSMTRTLVPA) is hinge. The NR LBD domain maps to 523–757 (SVAQLTPTLI…FPDMLSEIIS (235 aa)).

It belongs to the nuclear hormone receptor family. NR3 subfamily. As to quaternary structure, heteromultimeric cytoplasmic complex with HSP90. Upon ligand binding the complex undergoes a conformation change and moves to the nucleus, where it dissociates. Binds to DNA as a homodimer, and as heterodimer with NR3C2. Interaction with numerous other transcription factors modulates transcription activation. As to expression, expressed in liver with relative abundance.

The protein resides in the cytoplasm. It is found in the nucleus. It localises to the mitochondrion. The protein localises to the cytoskeleton. Its subcellular location is the spindle. The protein resides in the microtubule organizing center. It is found in the centrosome. Functionally, receptor for glucocorticoids (GC). Has a dual mode of action: as a transcription factor that binds to glucocorticoid response elements (GRE), both for nuclear and mitochondrial DNA, and as a modulator of other transcription factors. Affects inflammatory responses, cellular proliferation and differentiation in target tissues. Involved in chromatin remodeling. Plays a role in rapid mRNA degradation by binding to the 5' UTR of target mRNAs and interacting with PNRC2 in a ligand-dependent manner which recruits the RNA helicase UPF1 and the mRNA-decapping enzyme DCP1A, leading to RNA decay. Could act as a coactivator for STAT5-dependent transcription upon growth hormone (GH) stimulation and could reveal an essential role of hepatic GR in the control of body growth. Mediates glucocorticoid-induced apoptosis. Promotes accurate chromosome segregation during mitosis. May act as a tumor suppressor. May play a negative role in adipogenesis through the regulation of lipolytic and antilipogenic gene expression. This is Glucocorticoid receptor (nr3c1) from Xenopus laevis (African clawed frog).